Here is a 753-residue protein sequence, read N- to C-terminus: Pesticidal crystal protein Cry20Aa (753 aa).

A compositionally biased stretch (polar residues) spans 680–696 (DTTYQPSYDNYNQNASG). A disordered region spans residues 680-721 (DTTYQPSYDNYNQNASGTYDDGYNPNASDSYDQSYTNNYSQN). Positions 712-721 (QSYTNNYSQN) are enriched in low complexity.

The protein belongs to the delta endotoxin family. Has low mosquitocidal activity probably due to rapid proteolysis to inactive 56 kDa and 43 kDa proteins.

Its function is as follows. Promotes colloidosmotic lysis by binding to the midgut epithelial cells of mosquitos. Active against Aedes aegypti and Culex quinquefasciatus larvae. The polypeptide is Pesticidal crystal protein Cry20Aa (cry20Aa) (Bacillus thuringiensis subsp. fukuokaensis).